A 53-amino-acid chain; its full sequence is uncharacterized protein (53 aa).

Residues 28-45 (AIVFSLAVFGIVEAYYYW) traverse the membrane as a helical segment.

The protein localises to the host membrane. This is an uncharacterized protein from Acidianus convivator (ABV).